An 865-amino-acid polypeptide reads, in one-letter code: Alanine--tRNA ligase (865 aa).

His-552, His-556, Cys-654, and His-658 together coordinate Zn(2+).

The protein belongs to the class-II aminoacyl-tRNA synthetase family. The cofactor is Zn(2+).

It is found in the cytoplasm. It catalyses the reaction tRNA(Ala) + L-alanine + ATP = L-alanyl-tRNA(Ala) + AMP + diphosphate. Functionally, catalyzes the attachment of alanine to tRNA(Ala) in a two-step reaction: alanine is first activated by ATP to form Ala-AMP and then transferred to the acceptor end of tRNA(Ala). Also edits incorrectly charged Ser-tRNA(Ala) and Gly-tRNA(Ala) via its editing domain. In Coxiella burnetii (strain RSA 331 / Henzerling II), this protein is Alanine--tRNA ligase.